The primary structure comprises 260 residues: Flavin-dependent thymidylate synthase (260 aa).

One can recognise a ThyX domain in the interval Met-1–Asn-202. Residues Ser-55, Arg-79 to Arg-81, and Gln-87 contribute to the FAD site. DUMP-binding positions include Gln-76–Arg-79, Gln-87–Arg-91, and Arg-141. The short motif at Arg-79 to Ser-89 is the ThyX motif element. Residues Asn-157–Arg-159 and Asn-163 each bind FAD. Arg-168 is a dUMP binding site. The active-site Involved in ionization of N3 of dUMP, leading to its activation is Arg-168.

This sequence belongs to the thymidylate synthase ThyX family. In terms of assembly, homotetramer. It depends on FAD as a cofactor.

The enzyme catalyses dUMP + (6R)-5,10-methylene-5,6,7,8-tetrahydrofolate + NADPH + H(+) = dTMP + (6S)-5,6,7,8-tetrahydrofolate + NADP(+). It participates in pyrimidine metabolism; dTTP biosynthesis. Functionally, catalyzes the reductive methylation of 2'-deoxyuridine-5'-monophosphate (dUMP) to 2'-deoxythymidine-5'-monophosphate (dTMP) while utilizing 5,10-methylenetetrahydrofolate (mTHF) as the methyl donor, and NADPH and FADH(2) as the reductant. This Sulfolobus acidocaldarius (strain ATCC 33909 / DSM 639 / JCM 8929 / NBRC 15157 / NCIMB 11770) protein is Flavin-dependent thymidylate synthase.